A 331-amino-acid chain; its full sequence is D-alanine--D-alanine ligase (331 aa).

The region spanning 116–316 (KRQWQTHGLP…YEDFVLQLAA (201 aa)) is the ATP-grasp domain. 142–197 (ADRLGLPLIVKPAREGSSIGLTKVTSVAELPAAYEKAARLDRDVMAEQFIEGDELT) is a binding site for ATP. Positions 269, 283, and 285 each coordinate Mg(2+).

It belongs to the D-alanine--D-alanine ligase family. It depends on Mg(2+) as a cofactor. Mn(2+) is required as a cofactor.

It is found in the cytoplasm. The catalysed reaction is 2 D-alanine + ATP = D-alanyl-D-alanine + ADP + phosphate + H(+). The protein operates within cell wall biogenesis; peptidoglycan biosynthesis. In terms of biological role, cell wall formation. This is D-alanine--D-alanine ligase from Ralstonia pickettii (strain 12J).